Consider the following 345-residue polypeptide: Aspartate--ammonia ligase (345 aa).

This sequence belongs to the class-II aminoacyl-tRNA synthetase family. AsnA subfamily.

The protein localises to the cytoplasm. It carries out the reaction L-aspartate + NH4(+) + ATP = L-asparagine + AMP + diphosphate + H(+). Its pathway is amino-acid biosynthesis; L-asparagine biosynthesis; L-asparagine from L-aspartate (ammonia route): step 1/1. The sequence is that of Aspartate--ammonia ligase from Bacteroides fragilis (strain ATCC 25285 / DSM 2151 / CCUG 4856 / JCM 11019 / LMG 10263 / NCTC 9343 / Onslow / VPI 2553 / EN-2).